A 102-amino-acid polypeptide reads, in one-letter code: Cytochrome c oxidase subunit 6a, mitochondrial (102 aa).

The N-terminal 36 residues, 1–36 (MATAIVRSALSRAVTRAAPKTSVAPKRNFSSSAGHD), are a transit peptide targeting the mitochondrion.

Belongs to the cytochrome c oxidase subunit 6A (TC 3.D.4.11) family.

The protein resides in the mitochondrion inner membrane. Functionally, this protein is one of the nuclear-coded polypeptide chains of cytochrome c oxidase, the terminal oxidase in mitochondrial electron transport. This Arabidopsis thaliana (Mouse-ear cress) protein is Cytochrome c oxidase subunit 6a, mitochondrial (COX6A).